A 641-amino-acid chain; its full sequence is Probable potassium transport system protein Kup 4 (641 aa).

The next 12 membrane-spanning stretches (helical) occupy residues Ala-31–Leu-51, Thr-64–Ile-84, Ile-119–Pro-139, Gly-155–Ala-175, Ile-183–Leu-203, Ala-221–Leu-241, Trp-265–Ile-285, Leu-298–Ala-318, Ile-355–Phe-375, Leu-381–Phe-401, Leu-412–Ala-432, and Ile-437–Thr-457.

Belongs to the HAK/KUP transporter (TC 2.A.72) family.

The protein resides in the cell inner membrane. The enzyme catalyses K(+)(in) + H(+)(in) = K(+)(out) + H(+)(out). Transport of potassium into the cell. Likely operates as a K(+):H(+) symporter. The polypeptide is Probable potassium transport system protein Kup 4 (Bradyrhizobium sp. (strain BTAi1 / ATCC BAA-1182)).